The primary structure comprises 298 residues: Ornithine carbamoyltransferase (298 aa).

Carbamoyl phosphate-binding positions include 50 to 53, Gln77, Arg101, and 128 to 131; these read STRT and HPCQ. Residues Asn159, Asp216, and 220 to 221 each bind L-ornithine; that span reads SM. Residues 256-257 and Arg284 contribute to the carbamoyl phosphate site; that span reads CL.

It belongs to the aspartate/ornithine carbamoyltransferase superfamily. OTCase family.

The protein resides in the cytoplasm. It catalyses the reaction carbamoyl phosphate + L-ornithine = L-citrulline + phosphate + H(+). It participates in amino-acid biosynthesis; L-arginine biosynthesis; L-arginine from L-ornithine and carbamoyl phosphate: step 1/3. Its function is as follows. Reversibly catalyzes the transfer of the carbamoyl group from carbamoyl phosphate (CP) to the N(epsilon) atom of ornithine (ORN) to produce L-citrulline. The chain is Ornithine carbamoyltransferase from Methylococcus capsulatus (strain ATCC 33009 / NCIMB 11132 / Bath).